The primary structure comprises 417 residues: Calreticulin (417 aa).

Positions 1–17 are cleaved as a signal peptide; the sequence is MLLSVPLLLGLLGLAAA. Positions 18 to 197 are N-domain; the sequence is EPAVYFKEQF…NSQVESGSLE (180 aa). Gln-26 is a Ca(2+) binding site. Lys-48 bears the N6-acetyllysine mark. Ca(2+)-binding residues include Lys-62 and Lys-64. The cysteines at positions 105 and 137 are disulfide-linked. An alpha-D-glucoside is bound by residues Tyr-109, Lys-111, Tyr-128, and Asp-135. Lys-159 carries the N6-acetyllysine modification. The 1-1 repeat unit spans residues 191–202; that stretch reads VESGSLEDDWDF. Residues 191 to 255 are 4 X approximate repeats; that stretch reads VESGSLEDDW…DAKKPEDWDE (65 aa). The segment at 193-278 is disordered; the sequence is SGSLEDDWDF…PEYKGEWKPR (86 aa). The segment at 198–308 is P-domain; it reads DDWDFLPPKK…YSPDPSIYAY (111 aa). A compositionally biased stretch (basic and acidic residues) spans 207–251; it reads KIKDPDASKPEDWDERAKIDDPTDSKPEDWDKPEHIPDPDAKKPE. An N6-acetyllysine modification is found at Lys-209. Repeat copies occupy residues 210–221, 227–238, 244–255, 259–269, 273–283, and 287–297. Positions 237–270 are interaction with PPIB; sequence DKPEHIPDPDAKKPEDWDEEMDGEWEPPVIQNPE. Acidic residues predominate over residues 252–261; it reads DWDEEMDGEW. The segment at 259 to 297 is 3 X approximate repeats; that stretch reads GEWEPPVIQNPEYKGEWKPRQIDNPDYKGTWIHPEIDNP. Residues 309–417 are C-domain; sequence DNFGVLGLDL…DVPGQAKDEL (109 aa). Residue Asp-317 coordinates an alpha-D-glucoside. Ca(2+) is bound at residue Asp-328. Residues 350–417 form a disordered region; the sequence is TKAAEKQMKD…DVPGQAKDEL (68 aa). Positions 352 to 379 are enriched in basic and acidic residues; the sequence is AAEKQMKDKQDEEQRLKEEEEDKKRKEE. The span at 380–409 shows a compositional bias: acidic residues; it reads EEAEDKEDDEDKDEDEEDEEDKEEDEEEDV. The Prevents secretion from ER motif lies at 414-417; that stretch reads KDEL.

Belongs to the calreticulin family. In terms of assembly, monomer. Component of an EIF2 complex at least composed of CELF1/CUGBP1, CALR, CALR3, EIF2S1, EIF2S2, HSP90B1 and HSPA5. Interacts with PDIA3/ERp57 and SPACA9. Interacts with TRIM21. Interacts with NR3C1. Interacts with PPIB. Interacts (via P-domain) with PDIA5. Interacts with GABARAP. Interacts with CLCC1.

The protein localises to the endoplasmic reticulum lumen. It localises to the cytoplasm. It is found in the cytosol. Its subcellular location is the secreted. The protein resides in the extracellular space. The protein localises to the extracellular matrix. It localises to the cell surface. It is found in the sarcoplasmic reticulum lumen. Its subcellular location is the cytoplasmic vesicle. The protein resides in the secretory vesicle. The protein localises to the cortical granule. It localises to the cytoplasmic granule. Functionally, calcium-binding chaperone that promotes folding, oligomeric assembly and quality control in the endoplasmic reticulum (ER) via the calreticulin/calnexin cycle. This lectin interacts transiently with almost all of the monoglucosylated glycoproteins that are synthesized in the ER. Interacts with the DNA-binding domain of NR3C1 and mediates its nuclear export. Involved in maternal gene expression regulation. May participate in oocyte maturation via the regulation of calcium homeostasis. This Chlorocebus aethiops (Green monkey) protein is Calreticulin (CALR).